We begin with the raw amino-acid sequence, 368 residues long: Ankyrin repeat domain-containing protein 40 (368 aa).

N-acetylmethionine is present on Met-1. 2 ANK repeats span residues 9–38 (EQQE…DVNS) and 43–72 (NGWT…DKEI). Disordered regions lie at residues 93-115 (MGVE…KKES), 139-176 (DSAQ…GTFP), and 196-238 (ILRT…NGTY). The span at 95 to 107 (VEEEDDDDDDDDN) shows a compositional bias: acidic residues. The span at 149–169 (STPPASPPADGSPPLLPPGEP) shows a compositional bias: pro residues. Over residues 212–224 (PVSQSRSLFSSVP) the composition is skewed to polar residues.

The protein is Ankyrin repeat domain-containing protein 40 (ANKRD40) of Homo sapiens (Human).